The following is a 255-amino-acid chain: Imidazole glycerol phosphate synthase subunit HisF (255 aa).

Catalysis depends on residues Asp-11 and Asp-130.

Belongs to the HisA/HisF family. In terms of assembly, heterodimer of HisH and HisF.

The protein resides in the cytoplasm. The enzyme catalyses 5-[(5-phospho-1-deoxy-D-ribulos-1-ylimino)methylamino]-1-(5-phospho-beta-D-ribosyl)imidazole-4-carboxamide + L-glutamine = D-erythro-1-(imidazol-4-yl)glycerol 3-phosphate + 5-amino-1-(5-phospho-beta-D-ribosyl)imidazole-4-carboxamide + L-glutamate + H(+). It participates in amino-acid biosynthesis; L-histidine biosynthesis; L-histidine from 5-phospho-alpha-D-ribose 1-diphosphate: step 5/9. Its function is as follows. IGPS catalyzes the conversion of PRFAR and glutamine to IGP, AICAR and glutamate. The HisF subunit catalyzes the cyclization activity that produces IGP and AICAR from PRFAR using the ammonia provided by the HisH subunit. The polypeptide is Imidazole glycerol phosphate synthase subunit HisF (Exiguobacterium sp. (strain ATCC BAA-1283 / AT1b)).